The following is a 276-amino-acid chain: Sec-independent protein translocase protein TatC (276 aa).

Positions methionine 1–lysine 29 are disordered. A run of 6 helical transmembrane segments spans residues glycine 49–leucine 69, leucine 103–threonine 123, glycine 136–leucine 156, leucine 187–alanine 207, tryptophan 221–threonine 241, and methionine 242–tryptophan 262.

Belongs to the TatC family. As to quaternary structure, the Tat system comprises two distinct complexes: a TatABC complex, containing multiple copies of TatA, TatB and TatC subunits, and a separate TatA complex, containing only TatA subunits. Substrates initially bind to the TatABC complex, which probably triggers association of the separate TatA complex to form the active translocon.

The protein resides in the cell membrane. Part of the twin-arginine translocation (Tat) system that transports large folded proteins containing a characteristic twin-arginine motif in their signal peptide across membranes. Together with TatB, TatC is part of a receptor directly interacting with Tat signal peptides. The sequence is that of Sec-independent protein translocase protein TatC from Xylanimonas cellulosilytica (strain DSM 15894 / JCM 12276 / CECT 5975 / KCTC 9989 / LMG 20990 / NBRC 107835 / XIL07).